The following is a 507-amino-acid chain: Peroxisomal catalase (507 aa).

Catalysis depends on residues H65 and N138. Y348 provides a ligand contact to heme. Residues 505 to 507 (SKI) carry the Microbody targeting signal motif.

Belongs to the catalase family. In terms of assembly, homotetramer. Heme serves as cofactor.

Its subcellular location is the peroxisome matrix. It carries out the reaction 2 H2O2 = O2 + 2 H2O. Catalyzes the degradation of hydrogen peroxide (H(2)O(2)) generated by peroxisomal oxidases to water and oxygen, thereby protecting cells from the toxic effects of hydrogen peroxide. In Pichia angusta (Yeast), this protein is Peroxisomal catalase (PXP9).